We begin with the raw amino-acid sequence, 183 residues long: Adenine phosphoribosyltransferase 3 (183 aa).

It belongs to the purine/pyrimidine phosphoribosyltransferase family. In terms of assembly, homodimer.

The protein localises to the cytoplasm. It catalyses the reaction AMP + diphosphate = 5-phospho-alpha-D-ribose 1-diphosphate + adenine. Its pathway is purine metabolism; AMP biosynthesis via salvage pathway; AMP from adenine: step 1/1. Functionally, catalyzes a salvage reaction resulting in the formation of AMP, that is energically less costly than de novo synthesis. May contribute to the recycling of adenine into adenylate nucleotides and the inactivation of cytokinins by phosphoribosylation. Possesses low activity toward adenine and cytokinins. The protein is Adenine phosphoribosyltransferase 3 (APT3) of Arabidopsis thaliana (Mouse-ear cress).